The chain runs to 660 residues: Glutenin, high molecular weight subunit 12 (660 aa).

The N-terminal stretch at methionine 1–alanine 21 is a signal peptide. Over residues tyrosine 127–glutamine 136 the composition is skewed to polar residues. Residues tyrosine 127–glutamine 660 form a disordered region. Composition is skewed to low complexity over residues proline 141 to glutamine 166, glutamine 187 to glycine 200, glutamine 208 to glycine 248, and glutamine 255 to glycine 275. Over residues histidine 276–glutamine 286 the composition is skewed to polar residues. The span at glutamine 296–glycine 365 shows a compositional bias: low complexity. Over residues serine 370 to leucine 384 the composition is skewed to polar residues. Composition is skewed to low complexity over residues glutamine 385–glycine 426, proline 478–glycine 514, glutamine 522–glycine 535, and glutamine 551–glycine 577. The span at glutamine 590–proline 604 shows a compositional bias: gly residues.

The protein belongs to the gliadin/glutenin family. In terms of assembly, disulfide-bridge linked aggregates.

Functionally, glutenins are high-molecular weight seed storage proteins of wheat endosperm. Thought to be responsible for the visco-elastic property of wheat dough. The chain is Glutenin, high molecular weight subunit 12 from Triticum aestivum (Wheat).